Here is a 303-residue protein sequence, read N- to C-terminus: Shikimate kinase 1, chloroplastic (303 aa).

The transit peptide at 1 to 66 (MEAAITQRIQ…QRRAVSPAVS (66 aa)) directs the protein to the chloroplast. 109–116 (GMMGSGKT) provides a ligand contact to ATP. A Mg(2+)-binding site is contributed by threonine 116. Substrate is bound by residues aspartate 134, arginine 159, and glycine 181. Arginine 220 lines the ATP pocket.

The protein belongs to the shikimate kinase family. Homodimer. It depends on Mg(2+) as a cofactor.

Its subcellular location is the plastid. The protein localises to the chloroplast. The enzyme catalyses shikimate + ATP = 3-phosphoshikimate + ADP + H(+). Its pathway is metabolic intermediate biosynthesis; chorismate biosynthesis; chorismate from D-erythrose 4-phosphate and phosphoenolpyruvate: step 5/7. Catalyzes the specific phosphorylation of the 3-hydroxyl group of shikimic acid using ATP as a cosubstrate. The sequence is that of Shikimate kinase 1, chloroplastic (SK1) from Arabidopsis thaliana (Mouse-ear cress).